The primary structure comprises 2541 residues: Highly reducing polyketide synthase otaA (2541 aa).

One can recognise a Ketosynthase family 3 (KS3) domain in the interval 9-431 (SEPLAIIGLA…GTNAHVVLED (423 aa)). Active-site for beta-ketoacyl synthase activity residues include Cys-182, His-317, and His-355. Residues 571-888 (FIFTGQGANW…GSLLKRYETD (318 aa)) form the Malonyl-CoA:ACP transacylase (MAT) domain. Positions 957-1092 (HELLGVPVED…GSVRVETGPH (136 aa)) are N-terminal hotdog fold. Residues 957–1251 (HELLGVPVED…GLDLVQLPPS (295 aa)) form a dehydratase (DH) domain region. Residues 957–1254 (HELLGVPVED…LVQLPPSEDA (298 aa)) enclose the PKS/mFAS DH domain. The C-terminal hotdog fold stretch occupies residues 1108-1254 (TESVDIAQMY…LVQLPPSEDA (147 aa)). S-adenosyl-L-methionine is bound by residues Ile-1420 and Glu-1442. Residues 1433–1605 (HAQTGIKVLE…DQELRNAGLQ (173 aa)) form a methyltransferase (CMeT) domain region. In terms of domain architecture, Enoyl reductase (ER) spans 1838–2141 (HQPNGFHFVE…RQGNAGPWVL (304 aa)). The Ketoreductase (KR) domain maps to 2165 to 2344 (ASYLLIGGFG…PATSISLGSV (180 aa)). The region spanning 2453–2530 (DAVELVTRAI…QLAQQAAGGS (78 aa)) is the Carrier domain. Ser-2490 carries the post-translational modification O-(pantetheine 4'-phosphoryl)serine.

Pantetheine 4'-phosphate is required as a cofactor.

It carries out the reaction 4 malonyl-CoA + acetyl-CoA + 5 NADPH + 9 H(+) = 7-methylmellein + 3 CO2 + 5 NADP(+) + 5 CoA + 4 H2O. It participates in mycotoxin biosynthesis. Functionally, highly reducing polyketide synthase; part of the gene cluster that mediates the biosynthesis of ochratoxin A (OTA), a mycotoxin composed of a chlorinated type I polyketide dihydroisocoumarin moiety linked to L-phenylalanine, and demonstrated to have nephrotoxic, immunotoxic, genotoxic, neurotoxic, and teratogenic properties. OtaA catalyzes the condensation of one acetate and 4 malonate units to form the isocoumarin group. The pathway begins with the highly reducing polyketide synthase otaA that catalyzes the formation of the isocoumarin group during the initial stages of biosynthesis, starting from one acetate and 4 malonate units, to originate the characteristic pentaketide skeleton 7-methylmellein (7-MM) of the OTA molecule. The newly identified cyclase otaY might be involved in the polyketide cyclization reaction during the initial steps of the OTA biosynthesis. 7-MM is then oxidized into 7-carboxymellein (also called ochratoxin beta) by the cytochrome P450 monooxygenase otaC. The NRPS encoded by the otaB gene is involved in the linking of phenylalanine to the dihydroisocoumarin ring. The reaction catalyzed by NRPS results in the production of ochratoxin B (OTB), which is the non-chlorinated analog of OTA and which subsequently serves as the substrate of the halogenase otaD for chlorination activity to form the final molecular structure of OTA, containing a chlorine atom in the C-5 position of the molecule. The sequence is that of Highly reducing polyketide synthase otaA from Aspergillus carbonarius (strain ITEM 5010).